A 278-amino-acid chain; its full sequence is SPX domain-containing protein 2 (278 aa).

Residues 1 to 162 enclose the SPX domain; sequence MKFGKSLSSQ…GSMIRLPFVQ (162 aa). 2 disordered regions span residues 191 to 242 and 255 to 278; these read PTNE…KSTV and GSSTVSVFSLPPLHGSNGQDEPGR.

In terms of assembly, interacts (via SPX domain) with PHR2 (via C-terminus). Interacts with RLI1 in the nucleus to prevents its positive regulation of leaf inclination during phosphate (Pi) starvation.

The protein localises to the nucleus. Functionally, inhibits PHR2 DNA-binding activity via a phosphate (Pi)-dependent protein interaction. Together with SPX1, plays a negative role in the regulation of leaf inclination by preventing RLI1 transcription factor activity in Pi depleted conditions. This Oryza sativa subsp. indica (Rice) protein is SPX domain-containing protein 2.